A 141-amino-acid polypeptide reads, in one-letter code: Large ribosomal subunit protein uL11 (141 aa).

This sequence belongs to the universal ribosomal protein uL11 family. Part of the ribosomal stalk of the 50S ribosomal subunit. Interacts with L10 and the large rRNA to form the base of the stalk. L10 forms an elongated spine to which L12 dimers bind in a sequential fashion forming a multimeric L10(L12)X complex. One or more lysine residues are methylated.

Forms part of the ribosomal stalk which helps the ribosome interact with GTP-bound translation factors. The protein is Large ribosomal subunit protein uL11 of Synechococcus sp. (strain ATCC 27144 / PCC 6301 / SAUG 1402/1) (Anacystis nidulans).